The chain runs to 224 residues: Type II restriction enzyme BstVI (224 aa).

It belongs to the XhoI type II restriction endonuclease family.

The catalysed reaction is Endonucleolytic cleavage of DNA to give specific double-stranded fragments with terminal 5'-phosphates.. Functionally, a P subtype restriction enzyme that recognizes the double-stranded sequence 5'-CTCGAG-3' and cleaves after C-1. In Geobacillus stearothermophilus (Bacillus stearothermophilus), this protein is Type II restriction enzyme BstVI.